A 478-amino-acid polypeptide reads, in one-letter code: Leukotoxin secretion protein D (478 aa).

The Cytoplasmic portion of the chain corresponds to 1–59 (MKIWLSGIYEFFLRYKNTWAEVWKIRKELDHPNRKKDESEFLPAHLDLIETPVSKKPRL). A helical membrane pass occupies residues 60–80 (IAYLIMLFLVVAIVLASVSKV). Residues 81–478 (EIVATAPGKL…ESVTESLRER (398 aa)) lie on the Periplasmic side of the membrane.

The protein belongs to the membrane fusion protein (MFP) (TC 8.A.1) family.

It is found in the cell inner membrane. Functionally, involved in the transport of the Leukotoxin. This chain is Leukotoxin secretion protein D (lktD), found in Mannheimia haemolytica (Pasteurella haemolytica).